Reading from the N-terminus, the 460-residue chain is Bifunctional protein GlmU (460 aa).

The tract at residues 1-235 (MALSAAIVLA…PLTVEGVNDR (235 aa)) is pyrophosphorylase. UDP-N-acetyl-alpha-D-glucosamine is bound by residues 9-12 (LAAG), lysine 23, glutamine 76, and 81-82 (GT). Residue aspartate 109 coordinates Mg(2+). UDP-N-acetyl-alpha-D-glucosamine-binding residues include glycine 146, glutamate 161, asparagine 176, and asparagine 233. Asparagine 233 contributes to the Mg(2+) binding site. The tract at residues 236–256 (VQLAALSKTYNRRVCERWMRN) is linker. Residues 257–460 (GVTILDPETT…VEGWKPAWER (204 aa)) form an N-acetyltransferase region. Arginine 338 and lysine 356 together coordinate UDP-N-acetyl-alpha-D-glucosamine. The active-site Proton acceptor is histidine 368. 2 residues coordinate UDP-N-acetyl-alpha-D-glucosamine: tyrosine 371 and asparagine 382. Residues 391–392 (NY) and alanine 428 each bind acetyl-CoA.

It in the N-terminal section; belongs to the N-acetylglucosamine-1-phosphate uridyltransferase family. In the C-terminal section; belongs to the transferase hexapeptide repeat family. As to quaternary structure, homotrimer. Mg(2+) serves as cofactor.

The protein localises to the cytoplasm. The catalysed reaction is alpha-D-glucosamine 1-phosphate + acetyl-CoA = N-acetyl-alpha-D-glucosamine 1-phosphate + CoA + H(+). The enzyme catalyses N-acetyl-alpha-D-glucosamine 1-phosphate + UTP + H(+) = UDP-N-acetyl-alpha-D-glucosamine + diphosphate. Its pathway is nucleotide-sugar biosynthesis; UDP-N-acetyl-alpha-D-glucosamine biosynthesis; N-acetyl-alpha-D-glucosamine 1-phosphate from alpha-D-glucosamine 6-phosphate (route II): step 2/2. The protein operates within nucleotide-sugar biosynthesis; UDP-N-acetyl-alpha-D-glucosamine biosynthesis; UDP-N-acetyl-alpha-D-glucosamine from N-acetyl-alpha-D-glucosamine 1-phosphate: step 1/1. It functions in the pathway bacterial outer membrane biogenesis; LPS lipid A biosynthesis. In terms of biological role, catalyzes the last two sequential reactions in the de novo biosynthetic pathway for UDP-N-acetylglucosamine (UDP-GlcNAc). The C-terminal domain catalyzes the transfer of acetyl group from acetyl coenzyme A to glucosamine-1-phosphate (GlcN-1-P) to produce N-acetylglucosamine-1-phosphate (GlcNAc-1-P), which is converted into UDP-GlcNAc by the transfer of uridine 5-monophosphate (from uridine 5-triphosphate), a reaction catalyzed by the N-terminal domain. The protein is Bifunctional protein GlmU of Bifidobacterium longum subsp. infantis (strain ATCC 15697 / DSM 20088 / JCM 1222 / NCTC 11817 / S12).